Consider the following 582-residue polypeptide: Proline--tRNA ligase (582 aa).

It belongs to the class-II aminoacyl-tRNA synthetase family. ProS type 1 subfamily. As to quaternary structure, homodimer.

It is found in the cytoplasm. The enzyme catalyses tRNA(Pro) + L-proline + ATP = L-prolyl-tRNA(Pro) + AMP + diphosphate. Functionally, catalyzes the attachment of proline to tRNA(Pro) in a two-step reaction: proline is first activated by ATP to form Pro-AMP and then transferred to the acceptor end of tRNA(Pro). As ProRS can inadvertently accommodate and process non-cognate amino acids such as alanine and cysteine, to avoid such errors it has two additional distinct editing activities against alanine. One activity is designated as 'pretransfer' editing and involves the tRNA(Pro)-independent hydrolysis of activated Ala-AMP. The other activity is designated 'posttransfer' editing and involves deacylation of mischarged Ala-tRNA(Pro). The misacylated Cys-tRNA(Pro) is not edited by ProRS. This chain is Proline--tRNA ligase, found in Mycobacterium ulcerans (strain Agy99).